Reading from the N-terminus, the 122-residue chain is Large ribosomal subunit protein uL14 (122 aa).

This sequence belongs to the universal ribosomal protein uL14 family. Part of the 50S ribosomal subunit. Forms a cluster with proteins L3 and L19. In the 70S ribosome, L14 and L19 interact and together make contacts with the 16S rRNA in bridges B5 and B8.

Binds to 23S rRNA. Forms part of two intersubunit bridges in the 70S ribosome. The protein is Large ribosomal subunit protein uL14 of Parvibaculum lavamentivorans (strain DS-1 / DSM 13023 / NCIMB 13966).